The following is a 405-amino-acid chain: DNA primase DnaG (405 aa).

Positions 172-248 constitute a Toprim domain; the sequence is DSIIVVEGRA…HIDYIARAPP (77 aa). Mg(2+) contacts are provided by glutamate 178, aspartate 222, and aspartate 224. The interval 279-302 is disordered; it reads AAGEKTESQMSPQQPQLTQTQPTT. Residues 290–302 show a composition bias toward low complexity; that stretch reads PQQPQLTQTQPTT.

This sequence belongs to the archaeal DnaG primase family. Forms a ternary complex with MCM helicase and DNA. Component of the archaeal exosome complex. Mg(2+) is required as a cofactor.

The catalysed reaction is ssDNA + n NTP = ssDNA/pppN(pN)n-1 hybrid + (n-1) diphosphate.. RNA polymerase that catalyzes the synthesis of short RNA molecules used as primers for DNA polymerase during DNA replication. Also part of the exosome, which is a complex involved in RNA degradation. Acts as a poly(A)-binding protein that enhances the interaction between heteromeric, adenine-rich transcripts and the exosome. The protein is DNA primase DnaG of Pyrobaculum islandicum (strain DSM 4184 / JCM 9189 / GEO3).